A 303-amino-acid chain; its full sequence is Probable 5-dehydro-4-deoxyglucarate dehydratase (303 aa).

It belongs to the DapA family.

The catalysed reaction is 5-dehydro-4-deoxy-D-glucarate + H(+) = 2,5-dioxopentanoate + CO2 + H2O. The protein operates within carbohydrate acid metabolism; D-glucarate degradation; 2,5-dioxopentanoate from D-glucarate: step 2/2. This chain is Probable 5-dehydro-4-deoxyglucarate dehydratase, found in Pseudomonas syringae pv. syringae (strain B728a).